A 194-amino-acid polypeptide reads, in one-letter code: Putative manganese efflux pump MntP (194 aa).

The next 6 helical transmembrane spans lie at 6 to 26 (LILV…GLAL), 35 to 55 (WLFA…GLYL), 66 to 86 (VAAI…LWEA), 109 to 129 (GVLG…LDAL), 142 to 162 (VPLT…LGLL), and 174 to 194 (RAEL…LVGV).

Belongs to the MntP (TC 9.B.29) family.

The protein localises to the cell membrane. Its function is as follows. Probably functions as a manganese efflux pump. The sequence is that of Putative manganese efflux pump MntP from Moorella thermoacetica (strain ATCC 39073 / JCM 9320).